A 119-amino-acid polypeptide reads, in one-letter code: Large ribosomal subunit protein bL20c (119 aa).

Belongs to the bacterial ribosomal protein bL20 family.

Its subcellular location is the plastid. It localises to the chloroplast. Binds directly to 23S ribosomal RNA and is necessary for the in vitro assembly process of the 50S ribosomal subunit. It is not involved in the protein synthesizing functions of that subunit. The polypeptide is Large ribosomal subunit protein bL20c (rpl20) (Zea mays (Maize)).